We begin with the raw amino-acid sequence, 216 residues long: Imidazole glycerol phosphate synthase subunit HisH (216 aa).

The region spanning 2–216 (RVAIIDYGSG…LITNFLRWRP (215 aa)) is the Glutamine amidotransferase type-1 domain. C88 (nucleophile) is an active-site residue. Active-site residues include H196 and E198.

In terms of assembly, heterodimer of HisH and HisF.

The protein resides in the cytoplasm. It catalyses the reaction 5-[(5-phospho-1-deoxy-D-ribulos-1-ylimino)methylamino]-1-(5-phospho-beta-D-ribosyl)imidazole-4-carboxamide + L-glutamine = D-erythro-1-(imidazol-4-yl)glycerol 3-phosphate + 5-amino-1-(5-phospho-beta-D-ribosyl)imidazole-4-carboxamide + L-glutamate + H(+). It carries out the reaction L-glutamine + H2O = L-glutamate + NH4(+). It functions in the pathway amino-acid biosynthesis; L-histidine biosynthesis; L-histidine from 5-phospho-alpha-D-ribose 1-diphosphate: step 5/9. In terms of biological role, IGPS catalyzes the conversion of PRFAR and glutamine to IGP, AICAR and glutamate. The HisH subunit catalyzes the hydrolysis of glutamine to glutamate and ammonia as part of the synthesis of IGP and AICAR. The resulting ammonia molecule is channeled to the active site of HisF. The sequence is that of Imidazole glycerol phosphate synthase subunit HisH from Mesorhizobium japonicum (strain LMG 29417 / CECT 9101 / MAFF 303099) (Mesorhizobium loti (strain MAFF 303099)).